The sequence spans 430 residues: KIN17-like protein (430 aa).

The C2H2-type zinc finger occupies 28 to 50 (CQMCQKQCRDENGFKCHCMSESH). Positions 51–160 (QRQMQVFGQA…KARLKRKRIK (110 aa)) are winged helix-turn-helix (wHTH). Residues 147–183 (EQAVKARLKRKRIKSDLAEDERQERMIARQIERAQQS) adopt a coiled-coil conformation. Residues 155 to 158 (KRKR) carry the Nuclear localization signal (NLS) motif. 2 disordered regions span residues 179–230 (RAQQ…ANKA) and 261–284 (EEED…GKDA). The segment covering 191–224 (LGDDASPDGSEGESGSEDEYSDSENDHEGQEEDA) has biased composition (acidic residues). Residues 261 to 278 (EEEDEVSARDKEKEELAK) show a composition bias toward basic and acidic residues. A coiled-coil region spans residues 283-312 (DAINAAEARRSALDELMKEEEKAKERSNRK). Residues 319-370 (GIVVKVMSKSLAEKGYCKQKGVVKRVIDKYVGEIEMLESKHVLRVDQDELET) are C-terminal subdomain A. Residues 376–427 (GGLVRIVNGAYRGSNARLLSVDTERFCAKVQVEKGLYDGKVLKAIEYEDICK) are C-terminal subdomain B.

It belongs to the KIN17 family.

The protein resides in the nucleus. The protein is KIN17-like protein of Oryza sativa subsp. japonica (Rice).